The primary structure comprises 328 residues: Eukaryotic translation initiation factor 3 subunit I (328 aa).

WD repeat units follow at residues glycine 8–arginine 49, glycine 50–threonine 89, aspartate 146–glutamine 185, glycine 191–threonine 230, and glycine 288–lysine 327.

It belongs to the eIF-3 subunit I family. In terms of assembly, component of the eukaryotic translation initiation factor 3 (eIF-3) complex.

The protein localises to the cytoplasm. Functionally, component of the eukaryotic translation initiation factor 3 (eIF-3) complex, which is involved in protein synthesis of a specialized repertoire of mRNAs and, together with other initiation factors, stimulates binding of mRNA and methionyl-tRNAi to the 40S ribosome. The eIF-3 complex specifically targets and initiates translation of a subset of mRNAs involved in cell proliferation. The sequence is that of Eukaryotic translation initiation factor 3 subunit I (TIF3I1) from Arabidopsis thaliana (Mouse-ear cress).